We begin with the raw amino-acid sequence, 300 residues long: Iron/alpha-ketoglutarate-dependent dioxygenase okaE (300 aa).

3 residues coordinate Fe cation: H134, D136, and H210.

This sequence belongs to the PhyH family. As to quaternary structure, homodimer. Fe cation serves as cofactor.

It carries out the reaction okaramine A + 2-oxoglutarate + AH2 + O2 = 12-deshydroxyl okaramine E + succinate + A + CO2 + H2O. The catalysed reaction is 12-deshydroxyl okaramine E + 2-oxoglutarate + O2 = okaramine E + succinate + CO2. The enzyme catalyses okaramine A + 2-oxoglutarate + O2 = okaramine E + succinate + CO2. It participates in alkaloid biosynthesis. Its pathway is secondary metabolite biosynthesis; terpenoid biosynthesis. Iron/alpha-ketoglutarate-dependent dioxygenase; part of the gene cluster that mediates the biosynthesis of okaramine B, a prenylated indole alkaloid that possesses an unusual octacyclic ring system, including a four-membered azetidine ring and an eight-membered azocine ring, and that exhibits insecticidal activity against silkworm larvae. Within the pathway, okaE forms the unusual 2-dimethyl-3-methyl-azetidine ring to yield 12-deshydroxyl okaramine E from okaramine A. OkaE also catalyzes the hydroxylation of 12-deshydroxyl okaramine E to produce okaramine E. The biosynthesis begins with the NRPS okaA that condenses two tryptophan molecules into cyclo(L-Trp-L-Trp). Prenylation by the prenyltransferase okaC then leads to the formation of cyclo(N8-(alpha,alpha-dimethylallyl)-L-Trp-6a-(alpha,alpha-dime-thylallyl)-L-Trp). This is followed by indole 2,3-epoxidation by the FAD-dependent monooxygenase okaB to facilitate the formation of the hexahydropyrrolo[2,3-b]indole (HPI) moiety of okaramine C. The cytochrome P450 monooxygenase okaD then likely catalyzes formation of the eight-membered ring of okaramine A. The dioxygenase okaE further forms the unusual 2-dimethyl-3-methyl-azetidine ring to yield 12-deshydroxyl okaramine E, as well as the hydroxylation of 12-deshydroxyl okaramine E to produce okaramine E. The cytochrome P450 monoxygenase okaG converts 12-deshydroxyl okaramine E into 3-desmethyl okaramine B which is further methylated by the methyltransferase okaF into okaramine B. In a shunt pathway, okaG and okaF together are also able to convert okaramine E into okaramine D. Okaramine H is produced by nonenzymatic conversion from okaramine A. In Penicillium ochrochloron, this protein is Iron/alpha-ketoglutarate-dependent dioxygenase okaE.